The chain runs to 121 residues: ATP synthase epsilon chain (121 aa).

Belongs to the ATPase epsilon chain family. As to quaternary structure, F-type ATPases have 2 components, CF(1) - the catalytic core - and CF(0) - the membrane proton channel. CF(1) has five subunits: alpha(3), beta(3), gamma(1), delta(1), epsilon(1). CF(0) has three main subunits: a, b and c.

The protein resides in the cell membrane. Produces ATP from ADP in the presence of a proton gradient across the membrane. The sequence is that of ATP synthase epsilon chain from Mycobacterium avium (strain 104).